Reading from the N-terminus, the 248-residue chain is Flagellar L-ring protein (248 aa).

The first 23 residues, 1-23, serve as a signal peptide directing secretion; it reads MRHAFRHSVRTLGLLGLLPVLSA. Residue Cys24 is the site of N-palmitoyl cysteine attachment. Cys24 is lipidated: S-diacylglycerol cysteine.

This sequence belongs to the FlgH family. The basal body constitutes a major portion of the flagellar organelle and consists of four rings (L,P,S, and M) mounted on a central rod.

It localises to the cell outer membrane. The protein localises to the bacterial flagellum basal body. Assembles around the rod to form the L-ring and probably protects the motor/basal body from shearing forces during rotation. This Gluconobacter oxydans (strain 621H) (Gluconobacter suboxydans) protein is Flagellar L-ring protein.